We begin with the raw amino-acid sequence, 146 residues long: Leptin (146 aa).

C96 and C146 are disulfide-bonded.

This sequence belongs to the leptin family.

Its subcellular location is the secreted. Functionally, key player in the regulation of energy balance and body weight control. Once released into the circulation, has central and peripheral effects by binding LEPR, found in many tissues, which results in the activation of several major signaling pathways. In the hypothalamus, acts as an appetite-regulating factor that induces a decrease in food intake and an increase in energy consumption by inducing anorexinogenic factors and suppressing orexigenic neuropeptides, also regulates bone mass and secretion of hypothalamo-pituitary-adrenal hormones. In the periphery, increases basal metabolism, influences reproductive function, regulates pancreatic beta-cell function and insulin secretion, is pro-angiogenic for endothelial cell and affects innate and adaptive immunity. In the arcuate nucleus of the hypothalamus, activates by depolarization POMC neurons inducing FOS and SOCS3 expression to release anorexigenic peptides and inhibits by hyperpolarization NPY neurons inducing SOCS3 with a consequent reduction on release of orexigenic peptides. In addition to its known satiety inducing effect, has a modulatory role in nutrient absorption. In the intestine, reduces glucose absorption by enterocytes by activating PKC and leading to a sequential activation of p38, PI3K and ERK signaling pathways which exerts an inhibitory effect on glucose absorption. Acts as a growth factor on certain tissues, through the activation of different signaling pathways increases expression of genes involved in cell cycle regulation such as CCND1, via JAK2-STAT3 pathway, or VEGFA, via MAPK1/3 and PI3K-AKT1 pathways. May also play an apoptotic role via JAK2-STAT3 pathway and up-regulation of BIRC5 expression. Pro-angiogenic, has mitogenic activity on vascular endothelial cells and plays a role in matrix remodeling by regulating the expression of matrix metalloproteinases (MMPs) and tissue inhibitors of metalloproteinases (TIMPs). In innate immunity, modulates the activity and function of neutrophils by increasing chemotaxis and the secretion of oxygen radicals. Increases phagocytosis by macrophages and enhances secretion of pro-inflammatory mediators. Increases cytotoxic ability of NK cells. Plays a pro-inflammatory role, in synergy with IL1B, by inducing NOS2 which promotes the production of IL6, IL8 and Prostaglandin E2, through a signaling pathway that involves JAK2, PI3K, MAP2K1/MEK1 and MAPK14/p38. In adaptive immunity, promotes the switch of memory T-cells towards T helper-1 cell immune responses. Increases CD4(+)CD25(-) T-cell proliferation and reduces autophagy during TCR (T-cell receptor) stimulation, through MTOR signaling pathway activation and BCL2 up-regulation. The protein is Leptin (LEP) of Pan troglodytes (Chimpanzee).